The following is a 344-amino-acid chain: GDSL esterase/lipase At2g19010 (344 aa).

Residues 1–21 (MSKACWLVAAIIFTAATVVYG) form the signal peptide. Residue serine 33 is the Nucleophile of the active site. An N-linked (GlcNAc...) asparagine glycan is attached at asparagine 303. Active-site residues include aspartate 311 and histidine 314.

Belongs to the 'GDSL' lipolytic enzyme family.

The protein resides in the secreted. The sequence is that of GDSL esterase/lipase At2g19010 from Arabidopsis thaliana (Mouse-ear cress).